We begin with the raw amino-acid sequence, 82 residues long: Sec-independent protein translocase protein TatA (82 aa).

The chain crosses the membrane as a helical span at residues 1–21; it reads MLGFGPFELILIVVIIALLFG. Positions 36-47 are enriched in basic and acidic residues; the sequence is IKEFKQEMHEPS. Residues 36 to 82 form a disordered region; that stretch reads IKEFKQEMHEPSPPRPQVTDIPSQRLDPVTGAPVSTESTVPASDRRS.

This sequence belongs to the TatA/E family. Forms a complex with TatC.

The protein resides in the cell membrane. In terms of biological role, part of the twin-arginine translocation (Tat) system that transports large folded proteins containing a characteristic twin-arginine motif in their signal peptide across membranes. TatA could form the protein-conducting channel of the Tat system. This is Sec-independent protein translocase protein TatA from Deinococcus deserti (strain DSM 17065 / CIP 109153 / LMG 22923 / VCD115).